A 157-amino-acid polypeptide reads, in one-letter code: Ribosomal RNA large subunit methyltransferase H (157 aa).

S-adenosyl-L-methionine contacts are provided by residues L73, G104, and 123-128 (LGPLTL).

It belongs to the RNA methyltransferase RlmH family. In terms of assembly, homodimer.

It is found in the cytoplasm. The enzyme catalyses pseudouridine(1915) in 23S rRNA + S-adenosyl-L-methionine = N(3)-methylpseudouridine(1915) in 23S rRNA + S-adenosyl-L-homocysteine + H(+). In terms of biological role, specifically methylates the pseudouridine at position 1915 (m3Psi1915) in 23S rRNA. The sequence is that of Ribosomal RNA large subunit methyltransferase H from Xylella fastidiosa (strain M12).